Reading from the N-terminus, the 448-residue chain is RING finger protein 44 (448 aa).

The RING-type; atypical zinc-finger motif lies at 396 to 437 (CVVCFSDFESRQLLRVLPCNHEFHAKCVDKWLKTNRTCPICR).

The polypeptide is RING finger protein 44 (rnf44) (Danio rerio (Zebrafish)).